The sequence spans 120 residues: Putative monooxygenase GME11364 (120 aa).

Residues 9-99 (VSVHIRLTVD…ILLKPHEVEL (91 aa)) enclose the ABM domain.

It belongs to the LsrG family.

The protein operates within secondary metabolite biosynthesis. Its function is as follows. Putative monooxygenase; part of the gene cluster that mediates the biosynthesis of dibenzodioxocinones such as pestalotiollide B, a novel class of inhibitors against cholesterol ester transfer protein (CEPT). The biosynthesis initiates from condensation of acetate and malonate units catalyzed by the non-reducing PKS pks8/GME11356. Pks8/GME11356 lacks a thioesterase (TE) domain, which is important to the cyclizing of the third ring of atrochrysone carboxylic acid, and the esterase GME11355 might play the role of TE and catalyzes the cyclization reaction of the C ring. The lactamase-like protein GME11357 (or other beta-lactamases in Pestalotiopsis microspora) probably hydrolyzes the thioester bond between the ACP of pks8/GME11356 and the intermediate to release atrochrysone carboxylic acid, which is spontaneously dehydrates to form endocrocin anthrone. Endocrocin anthrone is further converted to emodin via the endocrocin intermediate. Emodin is then oxidized by several enzymes such as the Baeyer-Villiger oxidase GME11358, the oxidoreductase GME11367, the short chain dehydrogenase/reductase GME11373, as well as by other oxidoreductases from the cluster, to modify the A and C rings and open the B ring, and finally yield monodictyphenone. The prenyltransferase GME11375 may catalyze the addition reaction between the C5 side chains and the carbon bone of dibenzodioxocinones. The remaining biochemical reactions to the final product dibenzodioxocinones should be methylation catalyzed by methyltransferase GME11366 and reduction and lactonization reaction catalyzed by a series of oxidordeuctases. The protein is Putative monooxygenase GME11364 of Pestalotiopsis microspora.